A 367-amino-acid polypeptide reads, in one-letter code: tRNA-specific 2-thiouridylase MnmA (367 aa).

ATP contacts are provided by residues 13-20 and Met-39; that span reads GLSGGVDS. Positions 99–101 are interaction with target base in tRNA; it reads NPD. Cys-104 functions as the Nucleophile in the catalytic mechanism. Residues Cys-104 and Cys-200 are joined by a disulfide bond. Gly-128 lines the ATP pocket. Residues 150–152 are interaction with tRNA; that stretch reads KDQ. The active-site Cysteine persulfide intermediate is Cys-200. The interval 307–308 is interaction with tRNA; it reads RY.

The protein belongs to the MnmA/TRMU family.

Its subcellular location is the cytoplasm. It carries out the reaction S-sulfanyl-L-cysteinyl-[protein] + uridine(34) in tRNA + AH2 + ATP = 2-thiouridine(34) in tRNA + L-cysteinyl-[protein] + A + AMP + diphosphate + H(+). In terms of biological role, catalyzes the 2-thiolation of uridine at the wobble position (U34) of tRNA, leading to the formation of s(2)U34. The protein is tRNA-specific 2-thiouridylase MnmA of Neisseria meningitidis serogroup C (strain 053442).